The chain runs to 1149 residues: Protogenin A (1149 aa).

The first 23 residues, 1 to 23 (MASFKRDLYLFLAVFLSISGVWS), serve as a signal peptide directing secretion. At 24-932 (FSELFFIKEP…GFYHLDQRSM (909 aa)) the chain is on the extracellular side. 4 consecutive Ig-like domains span residues 27 to 117 (LFFI…ARLT), 122 to 209 (STFT…ATLT), 222 to 309 (PRII…ANIT), and 314 to 399 (PSLV…RLIV). Disulfide bonds link Cys48-Cys100 and Cys143-Cys192. N-linked (GlcNAc...) asparagine glycosylation occurs at Asn78. A glycan (N-linked (GlcNAc...) asparagine) is linked at Asn230. Cys243 and Cys291 form a disulfide bridge. Residues Asn300 and Asn307 are each glycosylated (N-linked (GlcNAc...) asparagine). Cys335 and Cys382 are oxidised to a cystine. 5 Fibronectin type-III domains span residues 408-502 (APRN…TLED), 504-600 (PLRA…TPKA), 605-704 (VPLA…VRDR), 711-804 (PPHH…TLPE), and 809-905 (APVG…IHTD). Asn460 and Asn475 each carry an N-linked (GlcNAc...) asparagine glycan. Asn617 carries an N-linked (GlcNAc...) asparagine glycan. The disordered stretch occupies residues 646–666 (GQSEAAQAQIPPHHRQHTIGG). Asn720, Asn741, and Asn753 each carry an N-linked (GlcNAc...) asparagine glycan. The helical transmembrane segment at 933–953 (AGIAVGVCIALTCIIICILIL) threads the bilayer. The Cytoplasmic portion of the chain corresponds to 954–1149 (ACRSKTRKSC…EQEMTDLHPV (196 aa)). The interval 1060–1149 (YTETSPENPP…EQEMTDLHPV (90 aa)) is disordered. Polar residues predominate over residues 1061 to 1073 (TETSPENPPTTLQ). The segment covering 1084 to 1106 (EGSHSSEGSHETSDSGRYSHDDT) has biased composition (basic and acidic residues).

The protein belongs to the immunoglobulin superfamily. DCC family. In terms of tissue distribution, expression begins in the posterior region of the embryo and this posterior restriction persists at the 4 s stage. At early somite stages, expressed along the neural tube with lower levels in the lateral and paraxial mesoderm. Expression decreases caudally and rostrally becomes restricted to the ventral part of the brain. Widespread in the spinal cord at 30 hours post-fertilization (hpf) and is also expressed in the lens from this time. At 40 hpf, expression is restricted to the lens.

The protein resides in the membrane. Its function is as follows. May play a role in anteroposterior axis elongation. In Danio rerio (Zebrafish), this protein is Protogenin A.